Here is a 575-residue protein sequence, read N- to C-terminus: Serine/threonine-protein kinase Pink1, mitochondrial (575 aa).

The N-terminal 51 residues, 1–51, are a transit peptide targeting the mitochondrion; that stretch reads MSLLAYTNLLLQNGRIFRYYKKANIKKFIKKIIKLDLKSTPSEASVSRQTF. The Mitochondrial intermembrane portion of the chain corresponds to 52 to 94; the sequence is LSTGLNSVKNAVQLQARKLLINNVLERVTPTLNSDLKKKAAKR. The chain crosses the membrane as a helical span at residues 95–118; the sequence is LFYGDSAPFFALVGVSLASGSGLL. The Cytoplasmic portion of the chain corresponds to 119–575; sequence TKDDELEGIC…KWIQELHIYN (457 aa). Residue Lys-193 coordinates ATP. 2 positions are modified to phosphoserine; by autocatalysis: Ser-202 and Ser-204. Glu-214 is a binding site for Mg(2+). Residue Thr-305 is modified to Phosphothreonine; by autocatalysis. Asp-334 functions as the Proton acceptor in the catalytic mechanism. Residues Asn-339 and Asp-357 each contribute to the Mg(2+) site.

This sequence belongs to the protein kinase superfamily. Ser/Thr protein kinase family. Mg(2+) is required as a cofactor. Post-translationally, proteolytically cleaved. In healthy cells, the precursor is continuously imported into mitochondria where it is proteolytically cleaved into its short form by the mitochondrial rhomboid protease rho-7 (8231301). The short form is then released into the cytosol where it rapidly undergoes proteasome-dependent degradation. In unhealthy cells, when cellular stress conditions lead to the loss of mitochondrial membrane potential, mitochondrial import is impaired leading to the precursor accumulating on the outer mitochondrial membrane (OMM). Autophosphorylated. Autophosphorylated on Ser-202, which activates kinase activity. Loss of mitochondrial membrane potential results in the precursor accumulating on the outer mitochondrial membrane (OMM) where it is activated by autophosphorylation at Ser-202. Autophosphorylation is sufficient and essential for selective recruitment of park to depolarized mitochondria, likely via Pink1-dependent phosphorylation of polyubiquitin chains. Also autophosphorylated at Ser-204 and Thr-305.

It is found in the mitochondrion outer membrane. The protein resides in the mitochondrion inner membrane. It localises to the cytoplasm. Its subcellular location is the cytosol. It carries out the reaction L-seryl-[protein] + ATP = O-phospho-L-seryl-[protein] + ADP + H(+). It catalyses the reaction L-threonyl-[protein] + ATP = O-phospho-L-threonyl-[protein] + ADP + H(+). In terms of biological role, acts as a serine/threonine-protein kinase. Exhibits a substrate preference for proline at position P+1 and a general preference at several residues for basic residues such as arginine. Also exhibits moderate preferences for a phosphotyrosine at position P-3 and a tryptophan at P-5. Critical to mitochondrial homeostasis it mediates several pathways that maintain mitochondrial health and function Protects against mitochondrial dysfunction during cellular stress by phosphorylating mitochondrial proteins such as park and likely Drp1, to coordinate mitochondrial quality control mechanisms that remove and replace dysfunctional mitochondrial components. Depending on the severity of mitochondrial damage and/or dysfunction, activity ranges from preventing apoptosis and stimulating mitochondrial biogenesis to regulating mitochondrial dynamics and eliminating severely damaged mitochondria via mitophagy. Appears to be particularly important in maintaining the physiology and function of cells with high energy demands that are undergoing stress or altered metabolic environment, including spermatids, muscle cells and neurons such as the dopaminergic (DA) neurons. Mediates the translocation and activation of park at the outer membrane (OMM) of dysfunctional/depolarized mitochondria. At the OMM of damaged mitochondria, phosphorylates pre-existing polyubiquitin chains, the Pink1-phosphorylated polyubiquitin then recruits park from the cytosol to the OMM where park is fully activated by phosphorylation at 'Ser-94' by Pink1. When cellular stress results in irreversible mitochondrial damage, functions with park to promote the clearance of dysfunctional and/or depolarized mitochondria by selective autophagy (mitophagy). The Pink1-park pathway also promotes fission and/or inhibits fusion of damaged mitochondria, by phosphorylating and thus promoting the park-dependent degradation of proteins involved in mitochondrial fusion/fission such as Marf, Opa1 and fzo. This prevents the refusion of unhealthy mitochondria with the mitochondrial network or initiates mitochondrial fragmentation facilitating their later engulfment by autophagosomes. Also likely to promote mitochondrial fission independently of park and Atg7-mediated mitophagy, via the phosphorylation and activation of Drp1. Regulates motility of damaged mitochondria by phosphorylating Miro which likely promotes its park-dependent degradation by the proteasome; in motor neurons, this inhibits mitochondrial intracellular anterograde transport along the axons which probably increases the chance of the mitochondria being eliminated in the soma. The Pink1-park pathway is also involved in mitochondrial regeneration processes such as promoting mitochondrial biogenesis, activating localized mitochondrial repair, promoting selective turnover of mitochondrial proteins and initiating the mitochondrial import of endogenous proteins. Involved in mitochondrial biogenesis by promoting the park-dependent ubiquitination of transcriptional repressor Paris which leads to its subsequent proteasomal degradation and allows activation of the transcription factor srl. Functions with park to promote localized mitochondrial repair by activating the translation of specific nuclear-encoded mitochondrial RNAs (nc-mtRNAs) on the mitochondrial surface, including several key electron transport chain component nc-mtRNAs. During oogenesis, phosphorylates and inactivates larp on the membrane of defective mitochondria, thus impairing local translation and mtDNA replication and consequently, reducing transmission of deleterious mtDNA mutations to the mature oocyte. Phosphorylates the mitochondrial acyl-CoA dehydrogenase Mcad, and appears to be important for maintaining fatty acid and amino acid metabolism via a mechanism that is independent of it's role in maintaining production of ATP. This Pediculus humanus subsp. corporis (Body louse) protein is Serine/threonine-protein kinase Pink1, mitochondrial.